Reading from the N-terminus, the 247-residue chain is Sugar fermentation stimulation protein homolog (247 aa).

This sequence belongs to the SfsA family.

This is Sugar fermentation stimulation protein homolog from Aeromonas hydrophila subsp. hydrophila (strain ATCC 7966 / DSM 30187 / BCRC 13018 / CCUG 14551 / JCM 1027 / KCTC 2358 / NCIMB 9240 / NCTC 8049).